A 1068-amino-acid chain; its full sequence is DNA-directed RNA polymerase subunit beta (1068 aa).

It belongs to the RNA polymerase beta chain family. As to quaternary structure, in plastids the minimal PEP RNA polymerase catalytic core is composed of four subunits: alpha, beta, beta', and beta''. When a (nuclear-encoded) sigma factor is associated with the core the holoenzyme is formed, which can initiate transcription.

It is found in the plastid. The protein localises to the chloroplast. The catalysed reaction is RNA(n) + a ribonucleoside 5'-triphosphate = RNA(n+1) + diphosphate. DNA-dependent RNA polymerase catalyzes the transcription of DNA into RNA using the four ribonucleoside triphosphates as substrates. This chain is DNA-directed RNA polymerase subunit beta, found in Staurastrum punctulatum (Green alga).